Reading from the N-terminus, the 277-residue chain is Putative phosphoenolpyruvate synthase regulatory protein (277 aa).

ADP is bound at residue Gly-157–Thr-164.

The protein belongs to the pyruvate, phosphate/water dikinase regulatory protein family. PSRP subfamily.

The enzyme catalyses [pyruvate, water dikinase] + ADP = [pyruvate, water dikinase]-phosphate + AMP + H(+). It carries out the reaction [pyruvate, water dikinase]-phosphate + phosphate + H(+) = [pyruvate, water dikinase] + diphosphate. Bifunctional serine/threonine kinase and phosphorylase involved in the regulation of the phosphoenolpyruvate synthase (PEPS) by catalyzing its phosphorylation/dephosphorylation. This is Putative phosphoenolpyruvate synthase regulatory protein from Aromatoleum aromaticum (strain DSM 19018 / LMG 30748 / EbN1) (Azoarcus sp. (strain EbN1)).